A 710-amino-acid chain; its full sequence is Subtilisin-like protease SBT4.8 (710 aa).

The signal sequence occupies residues 1–23 (MVKRASFCLLSCLIILFLSSVSA). Residues 24–111 (IIYDPQDKQV…VFRSKNYKLQ (88 aa)) constitute a propeptide, activation peptide. The region spanning 33–110 (VYVVYMGSLP…SVFRSKNYKL (78 aa)) is the Inhibitor I9 domain. In terms of domain architecture, Peptidase S8 spans 115-559 (SWDFMGMKEG…AGHVDPIAAI (445 aa)). Aspartate 143 serves as the catalytic Charge relay system. N-linked (GlcNAc...) asparagine glycosylation occurs at asparagine 174. Histidine 198 functions as the Charge relay system in the catalytic mechanism. Asparagine 221, asparagine 364, and asparagine 419 each carry an N-linked (GlcNAc...) asparagine glycan. In terms of domain architecture, PA spans 354-414 (KYPLEYGDYL…VLSQDDFDSL (61 aa)). The active-site Charge relay system is serine 498. Asparagine 535, asparagine 568, asparagine 580, asparagine 618, and asparagine 636 each carry an N-linked (GlcNAc...) asparagine glycan.

This sequence belongs to the peptidase S8 family. Post-translationally, the C-terminal propeptide is autocleaved.

It localises to the secreted. This Arabidopsis thaliana (Mouse-ear cress) protein is Subtilisin-like protease SBT4.8.